Reading from the N-terminus, the 507-residue chain is Photosystem II CP47 reaction center protein (507 aa).

Topologically, residues 2–16 (GLPWYRVHTVVLNDP) are cytoplasmic. A helical transmembrane segment spans residues 17–39 (GRLISVHLMHTALVAGWAGSMAL). Over 40–94 (YELAIFDSSDAVLNPMWRQGMFVLPFMARLGVTSSWNGWSVTGETGLDPGFWSFE) the chain is Lumenal, thylakoid. Residues 95 to 116 (GVAAAHIVLSGLLFLAAVWHWV) form a helical membrane-spanning segment. Over 117–134 (FWDLELFVDPRTGESALD) the chain is Cytoplasmic. A helical transmembrane segment spans residues 135-159 (LPKMFGIHLFLSGLLCFGFGAFHLT). At 160 to 196 (GVWGPGMWVSDPYGLTGHVQPVAPEWGPAGFNPFNPG) the chain is on the lumenal, thylakoid side. Residues 197–218 (GVVAHHIAAGIVGIIAGLFHLT) traverse the membrane as a helical segment. The Cytoplasmic segment spans residues 219 to 233 (VRPPERLYKALRMGN). Residues 234–255 (IETVLSSSIAAVFFAAFVVAGT) form a helical membrane-spanning segment. Topologically, residues 256 to 450 (MWYGNATTPI…GVFRTSPRGW (195 aa)) are lumenal, thylakoid. A helical membrane pass occupies residues 451–474 (FTFGHAVFALLFFFGHIWHGSRTL). Topologically, residues 475-507 (FRDVFAGVDPGLEEQVEFGVFAKVGDLSTRKEA) are cytoplasmic.

It belongs to the PsbB/PsbC family. PsbB subfamily. PSII is composed of 1 copy each of membrane proteins PsbA, PsbB, PsbC, PsbD, PsbE, PsbF, PsbH, PsbI, PsbJ, PsbK, PsbL, PsbM, PsbT, PsbX, Psb30/Ycf12, peripheral proteins PsbO, CyanoQ (PsbQ), PsbU, PsbV and a large number of cofactors. It forms dimeric complexes. Contacts PsbQ. Binds multiple chlorophylls. PSII binds additional chlorophylls, carotenoids and specific lipids. is required as a cofactor.

The protein resides in the cellular thylakoid membrane. One of the components of the core complex of photosystem II (PSII). It binds chlorophyll and helps catalyze the primary light-induced photochemical processes of PSII. PSII is a light-driven water:plastoquinone oxidoreductase, using light energy to abstract electrons from H(2)O, generating O(2) and a proton gradient subsequently used for ATP formation. This is Photosystem II CP47 reaction center protein from Synechocystis sp. (strain ATCC 27184 / PCC 6803 / Kazusa).